Here is a 1011-residue protein sequence, read N- to C-terminus: Liprin-beta-1 (1011 aa).

At S37 the chain carries Phosphoserine. T39 carries the phosphothreonine modification. Position 40 is a phosphoserine (S40). Positions 156-405 (QQELLSRTSL…VPEEFHTTIL (250 aa)) form a coiled coil. Position 322 is an N6-acetyllysine (K322). 2 disordered regions span residues 420 to 439 (ETSEKSKLTPKPETSFEEND) and 463 to 634 (KSSS…RDLG). Phosphoserine is present on residues S434 and S466. Positions 470 to 492 (LKKETSDGEKETIQKTSEDRAPA) are enriched in basic and acidic residues. K471 participates in a covalent cross-link: Glycyl lysine isopeptide (Lys-Gly) (interchain with G-Cter in SUMO2). 2 positions are modified to phosphoserine: S523 and S540. Residues 546–556 (ETEKETAEHLD) are compositionally biased toward basic and acidic residues. S579 bears the Phosphoserine mark. Over residues 584-598 (KKSRGIMKLFGKLRR) the composition is skewed to basic residues. 2 positions are modified to phosphoserine: S601 and S636. 2 SAM domains span residues 647 to 711 (WTKE…LGSE) and 719 to 782 (LDFN…LRIN). The residue at position 794 (S794) is a Phosphoserine. An SAM 3 domain is found at 804 to 876 (VQKWTNHRVM…ATHFNLLIGA (73 aa)). 3 positions are modified to phosphoserine: S999, S1001, and S1003. T1005 is subject to Phosphothreonine.

Belongs to the liprin family. Liprin-beta subfamily. As to quaternary structure, forms homodimers and heterodimers. Interacts with S100A4 in a Ca(2+)-dependent mode. Part of a cortical microtubule stabilization complex (CMSC) composed of KANK1, PPFIA1, PPFIBP1, ERC1/ELKS, PHLDB2/LL5beta, CLASPs, KIF21A and possibly additional interactors; within CMSCs KANK1 and PHLDB2/LL5beta seem to be the core components for recruiting microtubule-binding proteins KIF21A and CLASPs, whereas PPFIA1, PPFIBP1 and ERC1/ELKS serve as scaffolds for protein clustering. Interacts with KANK1 (via CC1 domain, residues 244-339). As to expression, widely expressed. Absent in liver.

The protein resides in the cytoplasm. It localises to the cell cortex. Functionally, may regulate the disassembly of focal adhesions. Did not bind receptor-like tyrosine phosphatases type 2A. The protein is Liprin-beta-1 (PPFIBP1) of Homo sapiens (Human).